We begin with the raw amino-acid sequence, 463 residues long: UDP-N-acetylmuramoyl-L-alanyl-D-glutamate--2,6-diaminopimelate ligase (463 aa).

Thr21 lines the UDP-N-acetyl-alpha-D-muramoyl-L-alanyl-D-glutamate pocket. 94–100 serves as a coordination point for ATP; that stretch reads GTNGKTT. UDP-N-acetyl-alpha-D-muramoyl-L-alanyl-D-glutamate-binding positions include 137–138, Ser164, Gln170, and Arg172; that span reads TT. Residue Lys204 is modified to N6-carboxylysine. Meso-2,6-diaminopimelate is bound by residues Arg358, 382–385, Gly433, and Glu437; that span reads DNPR. The short motif at 382-385 is the Meso-diaminopimelate recognition motif element; it reads DNPR.

It belongs to the MurCDEF family. MurE subfamily. Requires Mg(2+) as cofactor. In terms of processing, carboxylation is probably crucial for Mg(2+) binding and, consequently, for the gamma-phosphate positioning of ATP.

The protein localises to the cytoplasm. The enzyme catalyses UDP-N-acetyl-alpha-D-muramoyl-L-alanyl-D-glutamate + meso-2,6-diaminopimelate + ATP = UDP-N-acetyl-alpha-D-muramoyl-L-alanyl-gamma-D-glutamyl-meso-2,6-diaminopimelate + ADP + phosphate + H(+). It functions in the pathway cell wall biogenesis; peptidoglycan biosynthesis. Its function is as follows. Catalyzes the addition of meso-diaminopimelic acid to the nucleotide precursor UDP-N-acetylmuramoyl-L-alanyl-D-glutamate (UMAG) in the biosynthesis of bacterial cell-wall peptidoglycan. In Helicobacter hepaticus (strain ATCC 51449 / 3B1), this protein is UDP-N-acetylmuramoyl-L-alanyl-D-glutamate--2,6-diaminopimelate ligase.